The primary structure comprises 180 residues: uncharacterized protein (180 aa).

A Nudix hydrolase domain is found at 35–163 (LRHRATYIVV…TPDSLKALAL (129 aa)). The Nudix box motif lies at 72-94 (GGVVQADEQLLESARREAEEELG). Residues E88 and E92 each contribute to the Mg(2+) site.

This sequence belongs to the Nudix hydrolase family. It depends on Mg(2+) as a cofactor.

This is an uncharacterized protein from Escherichia coli O157:H7.